The following is a 302-amino-acid chain: Protein NEOXANTHIN-DEFICIENT 1 (302 aa).

Functionally, required for neoxanthin biosynthesis. Probably not involved directly in the enzymatic conversion of violaxanthin to neoxanthin. Is necessary but not sufficient for neoxanthin synthesis. The polypeptide is Protein NEOXANTHIN-DEFICIENT 1 (Oryza sativa subsp. japonica (Rice)).